A 93-amino-acid polypeptide reads, in one-letter code: Large ribosomal subunit protein uL23 (93 aa).

Belongs to the universal ribosomal protein uL23 family. In terms of assembly, part of the 50S ribosomal subunit. Contacts protein L29, and trigger factor when it is bound to the ribosome.

One of the early assembly proteins it binds 23S rRNA. One of the proteins that surrounds the polypeptide exit tunnel on the outside of the ribosome. Forms the main docking site for trigger factor binding to the ribosome. This Aliarcobacter butzleri (strain RM4018) (Arcobacter butzleri) protein is Large ribosomal subunit protein uL23.